Reading from the N-terminus, the 137-residue chain is MSQQSQVIITYARRKMARARCYITPGKGRVFVNDIPLEIIPMEVVRMKIMEPLLLAGEKISSSIDAKIYVEGGGVMGQADAARMALARALVKFTGSKELEEIYKVYDRTMLAGDPRQTESEKWMRYSARRWRQKAYR.

It belongs to the universal ribosomal protein uS9 family.

The polypeptide is Small ribosomal subunit protein uS9 (rps9) (Sulfurisphaera tokodaii (strain DSM 16993 / JCM 10545 / NBRC 100140 / 7) (Sulfolobus tokodaii)).